Consider the following 619-residue polypeptide: Putative transcription activator BRLF1 homolog (619 aa).

Disordered stretches follow at residues 301–389 (LRDS…ETQS) and 563–603 (GLVS…SDEM). Low complexity-rich tracts occupy residues 371-389 (EAPQAASQTQPTTTQETQS) and 567-582 (QQQAPAPPQNDQGGPP). A compositionally biased stretch (polar residues) spans 589-598 (QEQQQSSTDP).

It belongs to the herpesviridae TAF50 family.

Its function is as follows. Transcription activation. This Connochaetes taurinus (Blue wildebeest) protein is Putative transcription activator BRLF1 homolog (50).